A 408-amino-acid polypeptide reads, in one-letter code: Putative odorant receptor 92a (408 aa).

Topologically, residues 1–52 (MLFRKRKPKSDDEVITFDELTRFPMTFYKTIGEDLYSDRDPNVIRRYLLRFY) are cytoplasmic. Residues 53–73 (LVLGFLNFNAYVVGEIAYFIV) traverse the membrane as a helical segment. A topological domain (extracellular) is located at residue histidine 74. The helical transmembrane segment at 75–95 (IMSTTTLLEATAVAPCIGFSF) threads the bilayer. Topologically, residues 96-144 (MADFKQFGLTVNRKRLVRLLDDLKEIFPLDLEAQRKYNVSFYRKHMNRV) are cytoplasmic. The chain crosses the membrane as a helical span at residues 145 to 165 (MTLFTILCMTYTSSFSFYPAI). Topologically, residues 166–209 (KSTIKYYLMGSEIFERNYGFHILFPYDAETDLTVYWFSYWGLAH) are extracellular. The chain crosses the membrane as a helical span at residues 210–230 (CAYVAGVSYVCVDLLLIATIT). The Cytoplasmic segment spans residues 231–276 (QLTMHFNFIANDLEAYEGGDHTDEENIKYLHNLVVYHARALDLSEE). A helical transmembrane segment spans residues 277-301 (VNNIFSFLILWNFIAASLVICFAGF). The Extracellular segment spans residues 302-310 (QITASNVED). Residues 311–331 (IVLYFIFFSASLVQVFVVCYY) traverse the membrane as a helical segment. Over 332–378 (GDEMISSSSRIGHSAFNQNWLPCSTKYKRILQFIIARSQKPASIRPP) the chain is Cytoplasmic. The chain crosses the membrane as a helical span at residues 379 to 399 (TFPPISFNTFMKVISMSYQFF). At 400–408 (ALLRTTYYG) the chain is on the extracellular side.

Belongs to the insect chemoreceptor superfamily. Heteromeric odorant receptor channel (TC 1.A.69) family. Or49a subfamily. Interacts with Orco. Complexes exist early in the endomembrane system in olfactory sensory neurons (OSNs), coupling these complexes to the conserved ciliary trafficking pathway.

The protein localises to the cell membrane. In terms of biological role, odorant receptor which mediates acceptance or avoidance behavior, depending on its substrates. The odorant receptor repertoire encodes a large collection of odor stimuli that vary widely in identity, intensity, and duration. May form a complex with Orco to form odorant-sensing units, providing sensitive and prolonged odorant signaling and calcium permeability. This Drosophila melanogaster (Fruit fly) protein is Putative odorant receptor 92a (Or92a).